The primary structure comprises 357 residues: Elongation factor Ts (357 aa).

The tract at residues 82–85 (TDFV) is involved in Mg(2+) ion dislocation from EF-Tu.

Belongs to the EF-Ts family.

The protein localises to the cytoplasm. Its function is as follows. Associates with the EF-Tu.GDP complex and induces the exchange of GDP to GTP. It remains bound to the aminoacyl-tRNA.EF-Tu.GTP complex up to the GTP hydrolysis stage on the ribosome. This is Elongation factor Ts from Campylobacter jejuni subsp. jejuni serotype O:23/36 (strain 81-176).